We begin with the raw amino-acid sequence, 138 residues long: Cysteine desulfuration protein SufE (138 aa).

Cys51 (cysteine persulfide intermediate) is an active-site residue.

This sequence belongs to the SufE family. Homodimer. Interacts with SufS.

It localises to the cytoplasm. The protein operates within cofactor biosynthesis; iron-sulfur cluster biosynthesis. Functionally, participates in cysteine desulfuration mediated by SufS. Cysteine desulfuration mobilizes sulfur from L-cysteine to yield L-alanine and constitutes an essential step in sulfur metabolism for biosynthesis of a variety of sulfur-containing biomolecules. Functions as a sulfur acceptor for SufS, by mediating the direct transfer of the sulfur atom from the S-sulfanylcysteine of SufS, an intermediate product of cysteine desulfuration process. The chain is Cysteine desulfuration protein SufE from Shigella sonnei (strain Ss046).